An 84-amino-acid polypeptide reads, in one-letter code: Small ribosomal subunit protein bS20 (84 aa).

The segment at 1-28 (MPNIKSAIKRVKTAETRNSRNASQRSAM) is disordered.

Belongs to the bacterial ribosomal protein bS20 family.

In terms of biological role, binds directly to 16S ribosomal RNA. The chain is Small ribosomal subunit protein bS20 from Listeria monocytogenes serotype 4b (strain CLIP80459).